The sequence spans 294 residues: ATP synthase gamma chain (294 aa).

Belongs to the ATPase gamma chain family. In terms of assembly, F-type ATPases have 2 components, CF(1) - the catalytic core - and CF(0) - the membrane proton channel. CF(1) has five subunits: alpha(3), beta(3), gamma(1), delta(1), epsilon(1). CF(0) has three main subunits: a, b and c.

It is found in the cell inner membrane. Produces ATP from ADP in the presence of a proton gradient across the membrane. The gamma chain is believed to be important in regulating ATPase activity and the flow of protons through the CF(0) complex. The chain is ATP synthase gamma chain from Paraburkholderia phytofirmans (strain DSM 17436 / LMG 22146 / PsJN) (Burkholderia phytofirmans).